Here is an 813-residue protein sequence, read N- to C-terminus: Envelope glycoprotein H (813 aa).

A signal peptide spans 1 to 18; that stretch reads MGLPGSIVFLIMIHAFCA. Topologically, residues 19 to 769 are virion surface; that stretch reads KKTPTNTLPS…ESERVTIISA (751 aa). Residues Asn-62 and Asn-116 are each glycosylated (N-linked (GlcNAc...) asparagine; by host). Residues 135–159 are disordered; the sequence is DRSGLKLDDKDDAQPTGTNPPTELK. Residues 137 to 147 show a composition bias toward basic and acidic residues; sequence SGLKLDDKDDA. Positions 212–273 are interaction with gL; the sequence is DGAEVIMKIG…FTRRPYLIYL (62 aa). N-linked (GlcNAc...) asparagine; by host glycosylation is found at Asn-247, Asn-279, Asn-410, Asn-434, Asn-469, Asn-576, Asn-727, and Asn-750. The chain crosses the membrane as a helical span at residues 770 to 790; the sequence is TYVATATAGASIAISIAIITV. Topologically, residues 791–813 are intravirion; that stretch reads RMRINNFRYNYHRYKKLSLYDDL.

It belongs to the herpesviridae glycoprotein H family. Interacts with glycoprotein L (gL); this interaction is necessary for the correct processing and cell surface expression of gH. The heterodimer gH/gL seems to interact with gB trimers during fusion. Post-translationally, N-glycosylated, O-glycosylated, and sialylated.

Its subcellular location is the virion membrane. The protein resides in the host cell membrane. It is found in the host endosome membrane. Its function is as follows. The heterodimer glycoprotein H-glycoprotein L is required for the fusion of viral and plasma membranes leading to virus entry into the host cell. Following initial binding to host receptor, membrane fusion is mediated by the fusion machinery composed of gB and the heterodimer gH/gL. May also be involved in the fusion between the virion envelope and the outer nuclear membrane during virion morphogenesis. The chain is Envelope glycoprotein H from Gallid herpesvirus 2 (strain RB-1b) (GaHV-2).